We begin with the raw amino-acid sequence, 356 residues long: Heat-inducible transcription repressor HrcA (356 aa).

The protein belongs to the HrcA family.

Functionally, negative regulator of class I heat shock genes (grpE-dnaK-dnaJ and groELS operons). Prevents heat-shock induction of these operons. The chain is Heat-inducible transcription repressor HrcA from Chelativorans sp. (strain BNC1).